We begin with the raw amino-acid sequence, 499 residues long: Histidine ammonia-lyase (499 aa).

Residues 142-144 (ASG) constitute a cross-link (5-imidazolinone (Ala-Gly)). 2,3-didehydroalanine (Ser) is present on S143.

Belongs to the PAL/histidase family. Post-translationally, contains an active site 4-methylidene-imidazol-5-one (MIO), which is formed autocatalytically by cyclization and dehydration of residues Ala-Ser-Gly.

The protein localises to the cytoplasm. The catalysed reaction is L-histidine = trans-urocanate + NH4(+). The protein operates within amino-acid degradation; L-histidine degradation into L-glutamate; N-formimidoyl-L-glutamate from L-histidine: step 1/3. In Staphylococcus saprophyticus subsp. saprophyticus (strain ATCC 15305 / DSM 20229 / NCIMB 8711 / NCTC 7292 / S-41), this protein is Histidine ammonia-lyase.